Consider the following 28-residue polypeptide: Humanin-like 4 (28 aa).

Belongs to the humanin family. As to expression, highly expressed in testis. Also expressed in kidney, heart, skeletal muscles and brain.

It localises to the secreted. Its subcellular location is the cytoplasm. In terms of biological role, plays a role as a neuroprotective and antiapoptotic factor. The sequence is that of Humanin-like 4 from Homo sapiens (Human).